The primary structure comprises 292 residues: tRNA (adenine(9)-N1)-methyltransferase (292 aa).

The SAM-dependent MTase TRM10-type domain maps to 72-253 (TFRKGGKKVS…ISLQSKSDKI (182 aa)).

It belongs to the class IV-like SAM-binding methyltransferase superfamily. TRM10 family.

Its subcellular location is the cytoplasm. It carries out the reaction adenosine(9) in tRNA + S-adenosyl-L-methionine = N(1)-methyladenosine(9) in tRNA + S-adenosyl-L-homocysteine + H(+). In terms of biological role, catalyzes the S-adenosyl-L-methionine-dependent formation of N(1)-methyladenine at position 9 (m1A9) in tRNA. This Sulfolobus acidocaldarius (strain ATCC 33909 / DSM 639 / JCM 8929 / NBRC 15157 / NCIMB 11770) protein is tRNA (adenine(9)-N1)-methyltransferase.